Here is a 122-residue protein sequence, read N- to C-terminus: Large ribosomal subunit protein uL14 (122 aa).

Belongs to the universal ribosomal protein uL14 family. Part of the 50S ribosomal subunit. Forms a cluster with proteins L3 and L19. In the 70S ribosome, L14 and L19 interact and together make contacts with the 16S rRNA in bridges B5 and B8.

In terms of biological role, binds to 23S rRNA. Forms part of two intersubunit bridges in the 70S ribosome. In Corynebacterium glutamicum (strain R), this protein is Large ribosomal subunit protein uL14.